The primary structure comprises 363 residues: Protein RecA (363 aa).

79–86 (GPESSGKT) provides a ligand contact to ATP.

This sequence belongs to the RecA family.

The protein localises to the cytoplasm. Functionally, can catalyze the hydrolysis of ATP in the presence of single-stranded DNA, the ATP-dependent uptake of single-stranded DNA by duplex DNA, and the ATP-dependent hybridization of homologous single-stranded DNAs. It interacts with LexA causing its activation and leading to its autocatalytic cleavage. This chain is Protein RecA, found in Borrelia duttonii (strain Ly).